The sequence spans 333 residues: Trans-enoyl reductase apdC (333 aa).

45-48 contacts NADP(+); that stretch reads FDAK. 131–138 serves as a coordination point for substrate; that stretch reads VGLATVGM. NADP(+) contacts are provided by residues 167 to 170, tyrosine 185, and 232 to 233; these read SPHN and LD. Residue 252–256 coordinates substrate; it reads SVTMY. Residue 321 to 322 coordinates NADP(+); sequence VS.

The protein belongs to the zinc-containing alcohol dehydrogenase family. As to quaternary structure, monomer.

It participates in secondary metabolite biosynthesis. Its function is as follows. Trans-enoyl reductase; part of the gene cluster that mediates the biosynthesis of aspyridones. The polyketide-amino acid backbone preaspyridone A is first assembled by the PKS-NRPS hybrid apdA. The assembly of preaspyridone A is initiated by loading of malonyl-CoA onto apdA, followed by decarboxylation to yield the acetyl starter unit. The growing polyketide chain then elongates into a tetraketide. The adpA PKS module catalyzes three Claisen condensations, as well as beta-keto processing and methylation. Alpha-methylation step during polyketide synthesis is a prerequisite and a key checkpoint for chain transfer between PKS and NRPS modules. The downstream NRPS module contains the condensation (C), adenylation (A), and thiolation (T) domains and catalyzes the incorporation of tyrosine via the formation of the L-tyrosinyl-thioester and the amide linkage between L-tyrosinyl-thioester and the tetraketide. The bimodular assembly line is terminated with a reductase (R) domain that facilitates formation and release of the tetramic acid product. Because apdA lacks a designated enoylreductase (ER) domain, the required activity is provided the enoyl reductase apdC. ApdC appears to operate with different stereoselectivity in different PKS cycle. Combined with apdC, apdA is proposed to synthesize preaspyridone A via about 20 enzymatic steps. A number of oxidative steps performed successively by the cytochrome P450 monooxygenases apdE and apdB are required for the conversion of preaspyridone A to aspyridone A. The cytochrome P450 monooxygenase apdE is responsible for the oxidative dephenylation of preaspyridone A. Finally, the predicted FAD-dependent monooxygenase apdD and the acyl-CoA dehydrogenase apdG may be involved in the transformation of aspyridone A into aspyridone B. The chain is Trans-enoyl reductase apdC from Emericella nidulans (strain FGSC A4 / ATCC 38163 / CBS 112.46 / NRRL 194 / M139) (Aspergillus nidulans).